A 215-amino-acid polypeptide reads, in one-letter code: uncharacterized protein (215 aa).

Residues 120–147 (HRAPQGTSSYQEGRRAHEATSAESDDDN) form a disordered region.

This is an uncharacterized protein from Homo sapiens (Human).